Consider the following 697-residue polypeptide: Zinc finger protein 12 (697 aa).

Residue lysine 3 forms a Glycyl lysine isopeptide (Lys-Gly) (interchain with G-Cter in SUMO2) linkage. A KRAB domain is found at 8-79 (VSFKDVAVDF…EGEFLLQSYP (72 aa)). Glycyl lysine isopeptide (Lys-Gly) (interchain with G-Cter in SUMO2) cross-links involve residues lysine 98, lysine 179, lysine 182, lysine 209, lysine 215, lysine 224, lysine 239, and lysine 267. 2 C2H2-type zinc fingers span residues 269–291 (YECS…QRTH) and 297–319 (YECN…QRTH). Glycyl lysine isopeptide (Lys-Gly) (interchain with G-Cter in SUMO2) cross-links involve residues lysine 309, lysine 323, lysine 337, and lysine 365. 8 C2H2-type zinc fingers span residues 325-347 (YECN…QRTH), 353-375 (YECS…QRTH), 381-403 (YVCH…QKIH), 409-431 (YKCS…LRTH), 437-459 (YECN…YRTH), 465-487 (YECN…QRVH), 493-515 (YECN…HRTH), and 521-543 (YECS…RRIH). Glycyl lysine isopeptide (Lys-Gly) (interchain with G-Cter in SUMO2) cross-links involve residues lysine 544 and lysine 547. 5 consecutive C2H2-type zinc fingers follow at residues 549–571 (YECY…HRIH), 577–599 (YECS…QRTH), 605–627 (YECY…HRIH), 633–655 (FECN…YRTH), and 661–683 (YECT…QRIH).

Belongs to the krueppel C2H2-type zinc-finger protein family. In terms of tissue distribution, widely expressed in various adult tissues and embryonic developmental stages (isoform 3).

It localises to the nucleus. Functionally, transcriptional repressor which suppresses activation protein 1 (AP-1)- and serum response element (SRE)-mediated transcriptional activity. In Homo sapiens (Human), this protein is Zinc finger protein 12 (ZNF12).